Here is a 257-residue protein sequence, read N- to C-terminus: GTP cyclohydrolase FolE2 (257 aa).

This sequence belongs to the GTP cyclohydrolase IV family.

It catalyses the reaction GTP + H2O = 7,8-dihydroneopterin 3'-triphosphate + formate + H(+). Its pathway is cofactor biosynthesis; 7,8-dihydroneopterin triphosphate biosynthesis; 7,8-dihydroneopterin triphosphate from GTP: step 1/1. Functionally, converts GTP to 7,8-dihydroneopterin triphosphate. The protein is GTP cyclohydrolase FolE2 of Pelobacter propionicus (strain DSM 2379 / NBRC 103807 / OttBd1).